An 81-amino-acid polypeptide reads, in one-letter code: Putative defensin-like protein 148 (81 aa).

Residues 1–24 (MIKSFQLSFTVLIVFTVLILGVVG) form the signal peptide. Intrachain disulfides connect cysteine 34–cysteine 80, cysteine 43–cysteine 63, cysteine 48–cysteine 74, and cysteine 52–cysteine 76.

The protein belongs to the DEFL family.

Its subcellular location is the secreted. This chain is Putative defensin-like protein 148 (LCR4), found in Arabidopsis thaliana (Mouse-ear cress).